The chain runs to 381 residues: Acetyl-CoA:oxalate CoA-transferase (381 aa).

H233 is a catalytic residue.

The protein belongs to the CoA-transferase III family. As to quaternary structure, homodimer.

The catalysed reaction is oxalate + acetyl-CoA = oxalyl-CoA + acetate. Involved in the catabolism of oxalate and in the adapatation to low pH. ACOCT serves to prime the oxalate-induced acid tolerance response (ATR) cycle by producing substrate for oxalyl-CoA decarboxylase (OXC) and formyl-coenzyme A transferase (FCOCT). Catalyzes the reversible conversion of acetyl-CoA and oxalate to oxalyl-CoA and acetate. It can also use formyl-CoA and oxalate to produce oxalyl-CoA and formate with significantly reduced specific activity. The polypeptide is Acetyl-CoA:oxalate CoA-transferase (yfdE) (Escherichia coli (strain K12)).